Consider the following 520-residue polypeptide: CUGBP Elav-like family member 4 (520 aa).

RRM domains follow at residues 47-128 (IKLF…PADS), 135-215 (RKLF…FADT), and 435-513 (CNLF…LKRP).

The protein belongs to the CELF/BRUNOL family.

Its subcellular location is the nucleus. It is found in the cytoplasm. In terms of biological role, RNA-binding protein that may be implicated in the regulation of pre-mRNA alternative splicing. This Danio rerio (Zebrafish) protein is CUGBP Elav-like family member 4 (celf4).